Here is a 1499-residue protein sequence, read N- to C-terminus: Tyrosine-protein phosphatase non-receptor type 23 (1499 aa).

Residues 1–219 (LNVNLMLGQA…AKIEDKNEVL (219 aa)) form the BRO1 domain. 2 TPR repeats span residues 75–108 (AVAH…LNEA) and 199–232 (EEKA…DPDT). Coiled-coil stretches lie at residues 278–305 (EASL…LGQA), 377–464 (KAVL…NVQY), and 506–537 (YADL…LLDR). 2 disordered regions span residues 536–583 (DREL…MMAG) and 718–1006 (HMAL…LLQP). The segment at 598–993 (HFSPGPFPGS…SSSPESQHGG (396 aa)) is his. Residues 724 to 752 (GPAPAPPQPCFPVPQPVPQSVPQPQPLPT) show a composition bias toward pro residues. The span at 754 to 763 (YTYSIGTKQH) shows a compositional bias: polar residues. Position 785 is an omega-N-methylarginine (R785). Composition is skewed to pro residues over residues 785-827 (RIGP…PQPQ), 856-866 (LTPPPPYPFTP), 900-909 (FPSPGPPHPH), and 934-972 (GPPP…PPPC). Tandem repeats lie at residues 788 to 789 (PQ), 790 to 791 (PP), 792 to 793 (PQ), 794 to 795 (LQ), 796 to 797 (PQ), 798 to 799 (PQ), 800 to 801 (PQ), 802 to 803 (PQ), 804 to 805 (PQ), 806 to 807 (PP), 808 to 809 (PQ), 810 to 811 (PQ), 812 to 813 (PQ), 814 to 815 (PQ), 816 to 817 (PQ), 818 to 819 (PQ), 820 to 821 (PQ), 822 to 823 (PQ), 824 to 825 (PQ), and 826 to 827 (PQ). The segment at 788–827 (PQPPPQLQPQPQPQPQPQPPPQPQPQPQPQPQPQPQPQPQ) is 20 X 2 AA approximate tandem repeats of P-Q. 2 positions are modified to phosphoserine: S985 and S986. T994 carries the post-translational modification Phosphothreonine. In terms of domain architecture, Tyrosine-protein phosphatase spans 1055-1315 (DAVWRELQEA…KFCHEALVRH (261 aa)). C1255 functions as the Phosphocysteine intermediate in the catalytic mechanism. Disordered regions lie at residues 1322–1351 (RHGV…QDLV) and 1381–1499 (ASLP…LNKT). Polar residues predominate over residues 1335–1348 (MSVSQKSHLPQDSQ). Positions 1390-1419 (PGLPPASLPEPTPAPPSSPPPPSSPLPEPP) are enriched in pro residues. Residues 1427–1450 (VPEAPSLGPPSSSLELLASLTPEA) show a composition bias toward low complexity. The segment covering 1464–1473 (SKQNFLQAHN) has biased composition (polar residues). R1478 is modified (omega-N-methylarginine). Over residues 1482–1499 (PTDDPLSLLDPLWTLNKT) the composition is skewed to low complexity.

The protein belongs to the protein-tyrosine phosphatase family. Non-receptor class subfamily. Interacts with GRAP2 and GRB2. Interacts with UBAP1 and CHMP4B. As to expression, ubiquitously expressed, with highest levels in brain, testis and kidney, and lowest levels in skeletal muscle.

It is found in the nucleus. The protein localises to the cytoplasm. It localises to the cytoplasmic vesicle. The protein resides in the endosome. Its subcellular location is the cytoskeleton. It is found in the cilium basal body. It carries out the reaction O-phospho-L-tyrosyl-[protein] + H2O = L-tyrosyl-[protein] + phosphate. Functionally, plays a role in sorting of endocytic ubiquitinated cargos into multivesicular bodies (MVBs) via its interaction with the ESCRT-I complex (endosomal sorting complex required for transport I), and possibly also other ESCRT complexes. May act as a negative regulator of Ras-mediated mitogenic activity. Plays a role in ciliogenesis. This chain is Tyrosine-protein phosphatase non-receptor type 23 (Ptpn23), found in Rattus norvegicus (Rat).